A 77-amino-acid polypeptide reads, in one-letter code: Liver-expressed antimicrobial peptide 2 (77 aa).

The signal sequence occupies residues 1–22; that stretch reads MWHLKLCAVLMIFLLLLGQTDG. The propeptide occupies 23–37; sequence SPIPEVSSAKRRPRR. 2 cysteine pairs are disulfide-bonded: C54/C65 and C60/C70.

It belongs to the LEAP2 family.

It localises to the secreted. Its function is as follows. Has an antimicrobial activity. The protein is Liver-expressed antimicrobial peptide 2 (LEAP2) of Macaca mulatta (Rhesus macaque).